The sequence spans 441 residues: Methionine gamma-lyase (441 aa).

The segment at 1–25 is disordered; it reads MAHFLETQEPLVFSGKKRNDRDDED. Residue lysine 248 is modified to N6-(pyridoxal phosphate)lysine.

This sequence belongs to the trans-sulfuration enzymes family. As to quaternary structure, homotetramer. It depends on pyridoxal 5'-phosphate as a cofactor. In terms of tissue distribution, expressed in roots, stems, siliques, leaves, flowers and seeds after imbibition (at protein level). Transcripts accumulate in dry mature seeds, but at protein level, only present upon imbibition.

It localises to the cytoplasm. It catalyses the reaction L-methionine + H2O = methanethiol + 2-oxobutanoate + NH4(+). Catalyzes the degradation of L-methionine to alpha-ketobutyrate, methanethiol and ammonia. Exhibits a high activity toward L-methionine, L-ethionine, L-homocysteine and seleno-L-methionine, but not L-cysteine. Involved in an alternative cysteine biosynthesis pathway to the reverse trans-sulfuration pathway (methionine-&gt;homocysteine-&gt;cystathionine-&gt;cysteine) in which methanethiol is an intermediate. Also mediates an alternative isoleucine biosynthesis pathway in which 2-ketobutyrate is an intermediate. This chain is Methionine gamma-lyase (MGL), found in Arabidopsis thaliana (Mouse-ear cress).